Reading from the N-terminus, the 533-residue chain is Tyrosine protein-kinase src-1 (533 aa).

Gly2 is lipidated: N-myristoyl glycine. The SH3 domain maps to 71 to 132 (QERETLVALY…PRNFVAKQQT (62 aa)). An SH2 domain is found at 138–237 (WYAGKIPRNR…GLCCQLTFPA (100 aa)). The 260-residue stretch at 262–521 (LHLKRKLGDG…TLYHFFDDYF (260 aa)) folds into the Protein kinase domain. ATP contacts are provided by residues 268 to 276 (LGDGNFGEV) and Lys290. Asp381 functions as the Proton acceptor in the catalytic mechanism. Position 416 is a phosphotyrosine; by autocatalysis (Tyr416). Phosphotyrosine is present on Tyr528.

This sequence belongs to the protein kinase superfamily. Tyr protein kinase family. SRC subfamily. Interacts (via SH2 domain and SH3 domain) with unc-5 (via cytoplasmic domain); the interaction requires kinase activity. Interacts (when activated and phosphorylated at 'Tyr-416') with ina-1 (via cytoplasmic domain) and with ced-2 (via SH2 domain). Mg(2+) serves as cofactor. Requires Mn(2+) as cofactor. In terms of processing, may be phosphorylated on Tyr-528 by csk-1. Expressed in some neurons (ASE, ADF, AVA, AUA, RMDV and BAG) in the head region, anchor cell, vulva, cells around anus, body wall muscle, pharyngeal muscles in procorpus and metacorpus. Expressed in gonadal distal tip cells.

It localises to the cell membrane. The protein localises to the cell projection. The protein resides in the phagocytic cup. It carries out the reaction L-tyrosyl-[protein] + ATP = O-phospho-L-tyrosyl-[protein] + ADP + H(+). With respect to regulation, may be activated by autophosphorylation. May be inhibited by csk-1-mediated phosphorylation. Its function is as follows. Non-receptor tyrosine-protein kinase which plays a role in endoderm development by controlling spindle orientation in EMS blastomere, probably downstream of receptor mes-1. Also involved in embryonic body morphogenesis, especially in the formation of the pharynx and the intestine. May be dispensable for pharyngeal muscle organization in the adult. Probably phosphorylates netrin receptor unc-5, to regulate distal tip cell (DTC) migration during gonad development and in axon repulsion. Plays a role in the migration of the QR neuroblast, a precursor of the AVM neuron, and in the migration of the axon cone of AVM, ALM, CAN and PVM neurons. May act downstream of migratory protein mig-13 to control AVM neuron migration. Probably downstream of integrin ina-1/pat-3, plays a role in the clearance of apoptotic cells during mid-embryogenesis. Phosphorylates ced-1 at 'Tyr-1019' which promotes ced-1 proteasomal degradation, maintaining appropriate ced-1 levels for apoptotic cell clearance. This Caenorhabditis elegans protein is Tyrosine protein-kinase src-1.